We begin with the raw amino-acid sequence, 349 residues long: UDP-N-acetylenolpyruvoylglucosamine reductase (349 aa).

One can recognise an FAD-binding PCMH-type domain in the interval 24 to 197 (FGIAATARFA…VSVTFRLPKQ (174 aa)). Residue arginine 173 is part of the active site. Residue serine 249 is the Proton donor of the active site. Glutamate 345 is a catalytic residue.

Belongs to the MurB family. Requires FAD as cofactor.

It localises to the cytoplasm. It catalyses the reaction UDP-N-acetyl-alpha-D-muramate + NADP(+) = UDP-N-acetyl-3-O-(1-carboxyvinyl)-alpha-D-glucosamine + NADPH + H(+). Its pathway is cell wall biogenesis; peptidoglycan biosynthesis. In terms of biological role, cell wall formation. In Burkholderia lata (strain ATCC 17760 / DSM 23089 / LMG 22485 / NCIMB 9086 / R18194 / 383), this protein is UDP-N-acetylenolpyruvoylglucosamine reductase.